Consider the following 284-residue polypeptide: Bifunctional protein FolD (284 aa).

NADP(+) contacts are provided by residues 166 to 168 and Ile-232; that span reads GAS.

It belongs to the tetrahydrofolate dehydrogenase/cyclohydrolase family. Homodimer.

The enzyme catalyses (6R)-5,10-methylene-5,6,7,8-tetrahydrofolate + NADP(+) = (6R)-5,10-methenyltetrahydrofolate + NADPH. It catalyses the reaction (6R)-5,10-methenyltetrahydrofolate + H2O = (6R)-10-formyltetrahydrofolate + H(+). The protein operates within one-carbon metabolism; tetrahydrofolate interconversion. Its function is as follows. Catalyzes the oxidation of 5,10-methylenetetrahydrofolate to 5,10-methenyltetrahydrofolate and then the hydrolysis of 5,10-methenyltetrahydrofolate to 10-formyltetrahydrofolate. This Azotobacter vinelandii (strain DJ / ATCC BAA-1303) protein is Bifunctional protein FolD.